We begin with the raw amino-acid sequence, 473 residues long: Ribulose bisphosphate carboxylase large chain (473 aa).

Residues 1–2 (MS) constitute a propeptide that is removed on maturation. Residue proline 3 is modified to N-acetylproline. Lysine 14 carries the N6,N6,N6-trimethyllysine modification. Residues asparagine 123 and threonine 173 each contribute to the substrate site. Lysine 175 (proton acceptor) is an active-site residue. Residue lysine 177 participates in substrate binding. 3 residues coordinate Mg(2+): lysine 201, aspartate 203, and glutamate 204. Position 201 is an N6-carboxylysine (lysine 201). The active-site Proton acceptor is histidine 294. Residues arginine 295, histidine 327, and serine 379 each contribute to the substrate site.

It belongs to the RuBisCO large chain family. Type I subfamily. Heterohexadecamer of 8 large chains and 8 small chains; disulfide-linked. The disulfide link is formed within the large subunit homodimers. Mg(2+) is required as a cofactor. The disulfide bond which can form in the large chain dimeric partners within the hexadecamer appears to be associated with oxidative stress and protein turnover.

The protein resides in the plastid. It localises to the chloroplast. The catalysed reaction is 2 (2R)-3-phosphoglycerate + 2 H(+) = D-ribulose 1,5-bisphosphate + CO2 + H2O. It catalyses the reaction D-ribulose 1,5-bisphosphate + O2 = 2-phosphoglycolate + (2R)-3-phosphoglycerate + 2 H(+). Its function is as follows. RuBisCO catalyzes two reactions: the carboxylation of D-ribulose 1,5-bisphosphate, the primary event in carbon dioxide fixation, as well as the oxidative fragmentation of the pentose substrate in the photorespiration process. Both reactions occur simultaneously and in competition at the same active site. This is Ribulose bisphosphate carboxylase large chain from Cajanus cajan (Pigeon pea).